A 305-amino-acid polypeptide reads, in one-letter code: UDP-3-O-acyl-N-acetylglucosamine deacetylase (305 aa).

His78, His237, and Asp241 together coordinate Zn(2+). Catalysis depends on His264, which acts as the Proton donor.

Belongs to the LpxC family. Zn(2+) serves as cofactor.

It carries out the reaction a UDP-3-O-[(3R)-3-hydroxyacyl]-N-acetyl-alpha-D-glucosamine + H2O = a UDP-3-O-[(3R)-3-hydroxyacyl]-alpha-D-glucosamine + acetate. Its pathway is glycolipid biosynthesis; lipid IV(A) biosynthesis; lipid IV(A) from (3R)-3-hydroxytetradecanoyl-[acyl-carrier-protein] and UDP-N-acetyl-alpha-D-glucosamine: step 2/6. Its function is as follows. Catalyzes the hydrolysis of UDP-3-O-myristoyl-N-acetylglucosamine to form UDP-3-O-myristoylglucosamine and acetate, the committed step in lipid A biosynthesis. This is UDP-3-O-acyl-N-acetylglucosamine deacetylase from Burkholderia multivorans (strain ATCC 17616 / 249).